A 162-amino-acid polypeptide reads, in one-letter code: NAD(P)H-quinone oxidoreductase subunit N (162 aa).

This sequence belongs to the complex I NdhN subunit family. NDH-1 can be composed of about 15 different subunits; different subcomplexes with different compositions have been identified which probably have different functions.

Its subcellular location is the cellular thylakoid membrane. The catalysed reaction is a plastoquinone + NADH + (n+1) H(+)(in) = a plastoquinol + NAD(+) + n H(+)(out). It carries out the reaction a plastoquinone + NADPH + (n+1) H(+)(in) = a plastoquinol + NADP(+) + n H(+)(out). Its function is as follows. NDH-1 shuttles electrons from an unknown electron donor, via FMN and iron-sulfur (Fe-S) centers, to quinones in the respiratory and/or the photosynthetic chain. The immediate electron acceptor for the enzyme in this species is believed to be plastoquinone. Couples the redox reaction to proton translocation, and thus conserves the redox energy in a proton gradient. Cyanobacterial NDH-1 also plays a role in inorganic carbon-concentration. In Nostoc sp. (strain PCC 7120 / SAG 25.82 / UTEX 2576), this protein is NAD(P)H-quinone oxidoreductase subunit N.